The following is a 405-amino-acid chain: S-arrestin (405 aa).

Thr-234 is modified (phosphothreonine).

Belongs to the arrestin family. In terms of assembly, monomer. Homodimer. Homotetramer. Interacts with RHO (via the phosphorylated C-terminus). As to expression, detected in retina, in the proximal portion of the outer segment of rod photoreceptor cells (at protein level).

It is found in the cell projection. The protein resides in the cilium. The protein localises to the photoreceptor outer segment. It localises to the membrane. Its function is as follows. Binds to photoactivated, phosphorylated RHO and terminates RHO signaling via G-proteins by competing with G-proteins for the same binding site on RHO. May play a role in preventing light-dependent degeneration of retinal photoreceptor cells. This is S-arrestin (SAG) from Homo sapiens (Human).